Reading from the N-terminus, the 498-residue chain is ATP synthase subunit beta, chloroplastic (498 aa).

Gly172 to Thr179 lines the ATP pocket.

The protein belongs to the ATPase alpha/beta chains family. In terms of assembly, F-type ATPases have 2 components, CF(1) - the catalytic core - and CF(0) - the membrane proton channel. CF(1) has five subunits: alpha(3), beta(3), gamma(1), delta(1), epsilon(1). CF(0) has four main subunits: a(1), b(1), b'(1) and c(9-12).

Its subcellular location is the plastid. The protein localises to the chloroplast thylakoid membrane. The catalysed reaction is ATP + H2O + 4 H(+)(in) = ADP + phosphate + 5 H(+)(out). Functionally, produces ATP from ADP in the presence of a proton gradient across the membrane. The catalytic sites are hosted primarily by the beta subunits. The chain is ATP synthase subunit beta, chloroplastic from Pelargonium hortorum (Common geranium).